We begin with the raw amino-acid sequence, 799 residues long: MRDWQTFPDLQKKKVSRDHLNCPATMAGSNVLWPILLAVVLLQISVAFVSGAASGGVVLSDVNNMLRDAKVVTSEKPVVHSKQETEAPESSVELLRFVDDDEDSEDISSIERQDGRTMESKKMADQVRLLTKQLNALMLRRREDYEMLEHNLRKSLRLTTNANSVDADMRSELNQLREELAALRSSQSGNKERLTVEWLQQTISEIRKQLVDLQRTASNVAQDVQQRSSTFEDLATIRSDYQQLKLDLAAQRERQQQTEVYVQELREEMLQQEQDFQHALVKLQQRTRKDGSSASVEEESGSQEANQEQTGLETTADHKRRHCRFQSEQIHQLQLAQRNLRRQVNGLRFHHIDERVRSIEVEQHRIANANFNLSSQIASLDKLHTSMLELLEDVEGLQTKMDKSIPELRHEISKLEFANAQITSEQSLIREEGTNAARSLQAMAVSVSVLQEEREGMRKLSANVDQLRTNVDRLQSLVNDEMKNKLTHLNKPHKRPHHQNVQAQMPQDDSPIDSVLAETLVSELENVETQYEAIINKLPHDCSEVHTQTDGLHLIAPAGQRHPLMTHCTADGWTTVQRRFDGSADFNRSWADYAQGFGAPGGEFWIGNEQLHHLTLDNCSRLQVQMQDIYDNVWVAEYKRFYISSRADGYRLHIAEYSGNASDALNYQQGMQFSAIDDDRDISQTHCAANYEGGWWFSHCQHANLNGRYNLGLTWFDAARNEWIAVKSSRMLVKRLPAVECQANASASGAFVSVSGSAADAAPSSGATTTTTTATAAPATVTTPKTNNSVVQFVAAGQA.

The signal sequence occupies residues 1 to 51; it reads MRDWQTFPDLQKKKVSRDHLNCPATMAGSNVLWPILLAVVLLQISVAFVSG. The disordered stretch occupies residues 287–316; that stretch reads TRKDGSSASVEEESGSQEANQEQTGLETTA. An N-linked (GlcNAc...) asparagine glycan is attached at asparagine 372. Residues 489–498 are compositionally biased toward basic residues; it reads LNKPHKRPHH. The segment at 489-509 is disordered; it reads LNKPHKRPHHQNVQAQMPQDD. One can recognise a Fibrinogen C-terminal domain in the interval 533 to 737; it reads AIINKLPHDC…SSRMLVKRLP (205 aa). Cysteine 542 and cysteine 568 are joined by a disulfide. N-linked (GlcNAc...) asparagine glycosylation is found at asparagine 587, asparagine 618, and asparagine 660. A disulfide bridge links cysteine 687 with cysteine 700. 2 N-linked (GlcNAc...) asparagine glycosylation sites follow: asparagine 744 and asparagine 787.

In terms of processing, possesses five pairs of dibasic residues that may be the target of proteolytic processing.

The protein resides in the late endosome. Involved in regulation of neurogenesis. May encode a lateral inhibitor of R8 differentiation. In conjunction with Gp150, promotes Notch activation in response to Delta by regulating acquisition of insensitivity to Delta in a subset of cells. The polypeptide is Protein scabrous (sca) (Drosophila melanogaster (Fruit fly)).